Reading from the N-terminus, the 61-residue chain is Temporin-SN3 (61 aa).

Positions Met1–Cys22 are cleaved as a signal peptide. A propeptide spans Glu23–Lys44 (removed in mature form). Lys61 carries the lysine amide modification.

This sequence belongs to the frog skin active peptide (FSAP) family. Temporin subfamily. In terms of tissue distribution, expressed by the skin glands.

It is found in the secreted. Functionally, antimicrobial peptide. Active against some Gram-positive and Gram-negative bacterial strains. Active against fungus C.glabrata 090902 but not against C.albicans ATCC 12231. Shows weak hemolytic activity against human erythrocytes. The chain is Temporin-SN3 from Sylvirana spinulosa (Fine-spined frog).